The following is a 605-amino-acid chain: Elongation factor 4 (605 aa).

Residues 11-193 (EKIRNFSIIA…QIVEKVPAPT (183 aa)) form the tr-type G domain. GTP contacts are provided by residues 23–28 (DHGKST) and 140–143 (NKID).

The protein belongs to the TRAFAC class translation factor GTPase superfamily. Classic translation factor GTPase family. LepA subfamily.

Its subcellular location is the cell membrane. It catalyses the reaction GTP + H2O = GDP + phosphate + H(+). Functionally, required for accurate and efficient protein synthesis under certain stress conditions. May act as a fidelity factor of the translation reaction, by catalyzing a one-codon backward translocation of tRNAs on improperly translocated ribosomes. Back-translocation proceeds from a post-translocation (POST) complex to a pre-translocation (PRE) complex, thus giving elongation factor G a second chance to translocate the tRNAs correctly. Binds to ribosomes in a GTP-dependent manner. In Streptococcus pyogenes serotype M4 (strain MGAS10750), this protein is Elongation factor 4.